The sequence spans 182 residues: Probable chorismate pyruvate-lyase (182 aa).

Substrate is bound by residues arginine 81, leucine 119, and glutamate 171.

This sequence belongs to the UbiC family.

It is found in the cytoplasm. It catalyses the reaction chorismate = 4-hydroxybenzoate + pyruvate. It functions in the pathway cofactor biosynthesis; ubiquinone biosynthesis. Functionally, removes the pyruvyl group from chorismate, with concomitant aromatization of the ring, to provide 4-hydroxybenzoate (4HB) for the ubiquinone pathway. In Pseudomonas putida (Arthrobacter siderocapsulatus), this protein is Probable chorismate pyruvate-lyase.